Reading from the N-terminus, the 380-residue chain is Lipoyl synthase, mitochondrial (380 aa).

[4Fe-4S] cluster contacts are provided by C104, C109, C115, C135, C139, C142, and S350. The 220-residue stretch at 120-339 (EHGTQTATIM…ETRGNELGFL (220 aa)) folds into the Radical SAM core domain.

This sequence belongs to the radical SAM superfamily. Lipoyl synthase family. [4Fe-4S] cluster is required as a cofactor.

The protein resides in the mitochondrion. The enzyme catalyses [[Fe-S] cluster scaffold protein carrying a second [4Fe-4S](2+) cluster] + N(6)-octanoyl-L-lysyl-[protein] + 2 oxidized [2Fe-2S]-[ferredoxin] + 2 S-adenosyl-L-methionine + 4 H(+) = [[Fe-S] cluster scaffold protein] + N(6)-[(R)-dihydrolipoyl]-L-lysyl-[protein] + 4 Fe(3+) + 2 hydrogen sulfide + 2 5'-deoxyadenosine + 2 L-methionine + 2 reduced [2Fe-2S]-[ferredoxin]. Its pathway is protein modification; protein lipoylation via endogenous pathway; protein N(6)-(lipoyl)lysine from octanoyl-[acyl-carrier-protein]: step 2/2. Functionally, catalyzes the radical-mediated insertion of two sulfur atoms into the C-6 and C-8 positions of the octanoyl moiety bound to the lipoyl domains of lipoate-dependent enzymes, thereby converting the octanoylated domains into lipoylated derivatives. The sequence is that of Lipoyl synthase, mitochondrial from Culex quinquefasciatus (Southern house mosquito).